Reading from the N-terminus, the 274-residue chain is Probable lipoprotein peptidase YaeF (274 aa).

The first 20 residues, Met1 to Ala20, serve as a signal peptide directing secretion. Residue Cys21 is the site of N-palmitoyl cysteine attachment. A lipid anchor (S-diacylglycerol cysteine) is attached at Cys21. The active-site Nucleophile is the Cys207. The active-site Proton acceptor is the His257.

Its subcellular location is the cell inner membrane. This Escherichia coli (strain K12) protein is Probable lipoprotein peptidase YaeF (yaeF).